The following is a 481-amino-acid chain: Glycogen synthase (481 aa).

Position 16 (K16) interacts with ADP-alpha-D-glucose.

It belongs to the glycosyltransferase 1 family. Bacterial/plant glycogen synthase subfamily.

The catalysed reaction is [(1-&gt;4)-alpha-D-glucosyl](n) + ADP-alpha-D-glucose = [(1-&gt;4)-alpha-D-glucosyl](n+1) + ADP + H(+). Its pathway is glycan biosynthesis; glycogen biosynthesis. Synthesizes alpha-1,4-glucan chains using ADP-glucose. In Lacticaseibacillus casei (strain BL23) (Lactobacillus casei), this protein is Glycogen synthase.